Consider the following 422-residue polypeptide: Probable protease eep (422 aa).

His18 serves as a coordination point for Zn(2+). Glu19 is an active-site residue. His22 contributes to the Zn(2+) binding site. The next 3 helical transmembrane spans lie at Phe176–Leu196, Val349–Pro369, and Glu394–Trp414. Residues Pro179–Lys273 enclose the PDZ domain.

The protein belongs to the peptidase M50B family. The cofactor is Zn(2+).

The protein localises to the cell membrane. Its function is as follows. Involved in production of the peptide pheromone cAD1. The protein is Probable protease eep (eep) of Enterococcus faecalis (strain ATCC 700802 / V583).